The primary structure comprises 176 residues: Co-chaperone protein HscB homolog (176 aa).

Residues 8–80 form the J domain; the sequence is DFFALFGLPV…LRRATYLLKL (73 aa).

This sequence belongs to the HscB family. Interacts with HscA and stimulates its ATPase activity.

In terms of biological role, co-chaperone involved in the maturation of iron-sulfur cluster-containing proteins. Seems to help targeting proteins to be folded toward HscA. The protein is Co-chaperone protein HscB homolog of Cupriavidus taiwanensis (strain DSM 17343 / BCRC 17206 / CCUG 44338 / CIP 107171 / LMG 19424 / R1) (Ralstonia taiwanensis (strain LMG 19424)).